The sequence spans 445 residues: Putative U-box domain-containing protein 47 (445 aa).

Positions 64-137 constitute a U-box domain; sequence EVPKEFICTL…KEWCLIHNFD (74 aa).

The catalysed reaction is S-ubiquitinyl-[E2 ubiquitin-conjugating enzyme]-L-cysteine + [acceptor protein]-L-lysine = [E2 ubiquitin-conjugating enzyme]-L-cysteine + N(6)-ubiquitinyl-[acceptor protein]-L-lysine.. It participates in protein modification; protein ubiquitination. Its function is as follows. Functions as an E3 ubiquitin ligase. This Arabidopsis thaliana (Mouse-ear cress) protein is Putative U-box domain-containing protein 47 (PUB47).